The primary structure comprises 144 residues: Small ribosomal subunit protein uS11 (144 aa).

The interval 123–144 (EDVTPVPTDSTRRKGSRRGRRL) is disordered. Residues 135–144 (RKGSRRGRRL) are compositionally biased toward basic residues.

It belongs to the universal ribosomal protein uS11 family.

This Trypanosoma brucei brucei protein is Small ribosomal subunit protein uS11 (RPS14).